Consider the following 387-residue polypeptide: Beta-carotene 4-ketolase (387 aa).

Residues 1-78 form a disordered region; that stretch reads MPHSIDMEDS…GNPTVDDASQ (78 aa). 2 stretches are compositionally biased toward polar residues: residues 43–53 and 65–78; these read NWQTQYHSSEG and DATT…DASQ.

The catalysed reaction is echinenone + 2 AH2 + 2 O2 = canthaxanthin + 2 A + 3 H2O. It carries out the reaction all-trans-beta-carotene + 2 AH2 + 2 O2 = echinenone + 2 A + 3 H2O. It participates in carotenoid biosynthesis. In terms of biological role, involved in the biosynthesis of ketocarotenoids which are powerful anti-oxidative molecules. Catalyzes the conversion of beta-carotene to canthaxanthin via echinenone. The polypeptide is Beta-carotene 4-ketolase (Protosiphon botryoides (Green alga)).